The following is a 553-amino-acid chain: Transcriptional regulator HilA (553 aa).

Residues 11–107 (NKKFVFDDFI…LYGQGYRFNR (97 aa)) constitute a DNA-binding region (ompR/PhoB-type). Asp-62 carries the post-translational modification 4-aspartylphosphate. The stretch at 372–405 (ADIKYYYGWNLFMAGQLEEALQTINECLKLDPTR) is one TPR repeat.

The main transcriptional regulator of the Salmonella pathogenicity island 1 (SPI1) gene expression. Activates the expression of invasion genes by a direct action at their promoters and also indirectly by increasing the level of invF. Also binds upstream of prgH and directly activates the expression of prgHIJK operon. This is Transcriptional regulator HilA (hilA) from Salmonella paratyphi A (strain ATCC 9150 / SARB42).